Here is a 281-residue protein sequence, read N- to C-terminus: Penicillin-insensitive murein endopeptidase (281 aa).

The N-terminal stretch at 1-24 is a signal peptide; it reads MKQGLIGVLALALGATLLSSAVWA. 3 disulfide bridges follow: cysteine 49/cysteine 270, cysteine 192/cysteine 240, and cysteine 221/cysteine 228. Residues histidine 115, histidine 118, aspartate 125, and histidine 216 each contribute to the Zn(2+) site. Residues 230–271 form a disordered region; it reads EQSEPPIGDGCGAELTSWFQPKQPSSEAPEKTTPPPLPPSCQ. The segment covering 246 to 255 has biased composition (polar residues); sequence SWFQPKQPSS.

This sequence belongs to the peptidase M74 family. In terms of assembly, dimer. Zn(2+) is required as a cofactor.

It localises to the periplasm. Its function is as follows. Murein endopeptidase that cleaves the D-alanyl-meso-2,6-diamino-pimelyl amide bond that connects peptidoglycan strands. Likely plays a role in the removal of murein from the sacculus. This chain is Penicillin-insensitive murein endopeptidase (mepA), found in Pectobacterium atrosepticum (strain SCRI 1043 / ATCC BAA-672) (Erwinia carotovora subsp. atroseptica).